We begin with the raw amino-acid sequence, 390 residues long: Digeranylgeranylglycerophospholipid reductase (390 aa).

FAD contacts are provided by alanine 18, glutamate 37, cysteine 48, alanine 49, alanine 51, arginine 98, valine 122, aspartate 278, glycine 290, and isoleucine 291. Valine 368 contributes to the a 2,3-bis-O-(geranylgeranyl)-sn-glycerol 1-phospholipid binding site.

The protein belongs to the geranylgeranyl reductase family. DGGGPL reductase subfamily. Requires FAD as cofactor.

The catalysed reaction is a 2,3-bis-O-phytanyl-sn-glycerol 1-phospholipid + 8 A = a 2,3-bis-O-(geranylgeranyl)-sn-glycerol 1-phospholipid + 8 AH2. It catalyses the reaction 2,3-bis-O-(phytanyl)-sn-glycerol 1-phosphate + 8 A = 2,3-bis-O-(geranylgeranyl)-sn-glycerol 1-phosphate + 8 AH2. It carries out the reaction CDP-2,3-bis-O-(geranylgeranyl)-sn-glycerol + 8 AH2 = CDP-2,3-bis-O-(phytanyl)-sn-glycerol + 8 A. The enzyme catalyses archaetidylserine + 8 AH2 = 2,3-bis-O-phytanyl-sn-glycero-3-phospho-L-serine + 8 A. The protein operates within membrane lipid metabolism; glycerophospholipid metabolism. In terms of biological role, is involved in the reduction of 2,3-digeranylgeranylglycerophospholipids (unsaturated archaeols) into 2,3-diphytanylglycerophospholipids (saturated archaeols) in the biosynthesis of archaeal membrane lipids. Catalyzes the formation of archaetidic acid (2,3-di-O-phytanyl-sn-glyceryl phosphate) from 2,3-di-O-geranylgeranylglyceryl phosphate (DGGGP) via the hydrogenation of each double bond of the isoprenoid chains. Is also probably able to reduce double bonds of geranyl groups in CDP-2,3-bis-O-(geranylgeranyl)-sn-glycerol and archaetidylserine, thus acting at various stages in the biosynthesis of archaeal membrane lipids. The protein is Digeranylgeranylglycerophospholipid reductase of Methanococcus maripaludis (strain C5 / ATCC BAA-1333).